The following is a 379-amino-acid chain: MSAIRYELIKTDKQTGARLGKIHTPHGTFDTPMFMPVGTLATVKTMSPEELKAMGAGIILSNTYHLWLRPGEELIREAGGLHKFMNWDQPILTDSGGFQVFSLSKMRDIKEEGVHFRNHLNGDKLFLSPEKAIQIQNALGSDIMMSFDECPPYPASHEYMKKSVERTSRWAERGLQAHARPEDQGLFGIVQGGAYEDLRAQSAKDLVSLDFPGYSIGGLSVGEPKDVMNRVLEHTTPLLPANKPRYLMGVGSPDSLIDGVIRGVDMFDCVLPTRIARNGTCMTSSGRLVIKNAKFTHDFRPIDENCDCYTCKNYSRAYIRHLIRCEETFGIRLTTYHNLHFLLNLMKQVRSAIMEDRLADFREEFFEQYGFNRPDAKNF.

Catalysis depends on Asp94, which acts as the Proton acceptor. Substrate is bound by residues Asp94–Phe98, Asp148, Gln191, and Gly218. The tract at residues Gly249–Ser255 is RNA binding. Residue Asp268 is the Nucleophile of the active site. The tract at residues Thr273–Arg277 is RNA binding; important for wobble base 34 recognition. Zn(2+) is bound by residues Cys306, Cys308, Cys311, and His337.

It belongs to the queuine tRNA-ribosyltransferase family. As to quaternary structure, homodimer. Within each dimer, one monomer is responsible for RNA recognition and catalysis, while the other monomer binds to the replacement base PreQ1. Zn(2+) is required as a cofactor.

It catalyses the reaction 7-aminomethyl-7-carbaguanine + guanosine(34) in tRNA = 7-aminomethyl-7-carbaguanosine(34) in tRNA + guanine. It participates in tRNA modification; tRNA-queuosine biosynthesis. Catalyzes the base-exchange of a guanine (G) residue with the queuine precursor 7-aminomethyl-7-deazaguanine (PreQ1) at position 34 (anticodon wobble position) in tRNAs with GU(N) anticodons (tRNA-Asp, -Asn, -His and -Tyr). Catalysis occurs through a double-displacement mechanism. The nucleophile active site attacks the C1' of nucleotide 34 to detach the guanine base from the RNA, forming a covalent enzyme-RNA intermediate. The proton acceptor active site deprotonates the incoming PreQ1, allowing a nucleophilic attack on the C1' of the ribose to form the product. After dissociation, two additional enzymatic reactions on the tRNA convert PreQ1 to queuine (Q), resulting in the hypermodified nucleoside queuosine (7-(((4,5-cis-dihydroxy-2-cyclopenten-1-yl)amino)methyl)-7-deazaguanosine). This Listeria welshimeri serovar 6b (strain ATCC 35897 / DSM 20650 / CCUG 15529 / CIP 8149 / NCTC 11857 / SLCC 5334 / V8) protein is Queuine tRNA-ribosyltransferase.